Consider the following 268-residue polypeptide: uncharacterized protein (268 aa).

4 helical membrane passes run Ser32 to Ile52, Val70 to Phe90, Gly125 to Phe145, and Ile237 to Thr257.

Belongs to the CbiQ family.

It is found in the cell membrane. This is an uncharacterized protein from Methanocaldococcus jannaschii (strain ATCC 43067 / DSM 2661 / JAL-1 / JCM 10045 / NBRC 100440) (Methanococcus jannaschii).